We begin with the raw amino-acid sequence, 316 residues long: Cuticle collagen 7 (316 aa).

An N-terminal signal peptide occupies residues 1 to 34 (MSSATFLSVMAGLSGIVVFGALISVFHIYSDINS). Disordered stretches follow at residues 78–269 (KQSQ…DAAY) and 281–316 (HRNV…HVQA). Residues 79-90 (QSQCNCGQQASN) are compositionally biased toward polar residues. 3 triple-helical region regions span residues 94 to 126 (GPPG…AGPS), 139 to 198 (GLPG…PGKS), and 204 to 263 (GLPG…DGTP). Low complexity-rich tracts occupy residues 110-125 (QPGQ…VAGP), 137-147 (PQGLPGPAGVP), and 177-198 (AGSA…PGKS). Over residues 209–221 (SGAPGPQGPPGAP) the composition is skewed to pro residues. A compositionally biased stretch (low complexity) spans 241-260 (PNGQPGHPGQDGQPGAPGND).

It belongs to the cuticular collagen family. Collagen polypeptide chains are complexed within the cuticle by disulfide bonds and other types of covalent cross-links.

Functionally, nematode cuticles are composed largely of collagen-like proteins. The cuticle functions both as an exoskeleton and as a barrier to protect the worm from its environment. This chain is Cuticle collagen 7 (col-7), found in Caenorhabditis elegans.